The following is a 154-amino-acid chain: Iron-sulfur cluster assembly 2 homolog, mitochondrial (154 aa).

The N-terminal 8 residues, 1–8, are a transit peptide targeting the mitochondrion; the sequence is MAAAWGSS. The tract at residues 29 to 49 is disordered; the sequence is SLGPQARREASSSSPEAGEGQ. A compositionally biased stretch (low complexity) spans 39 to 49; sequence SSSSPEAGEGQ. Positions 79, 144, and 146 each coordinate Fe cation.

The protein belongs to the HesB/IscA family. In terms of assembly, heterotetramer; forms a dimer of dimers with IBA57. Interacts with [2Fe-2S]-ISCA2 forming the heterodimer [2Fe- 2S]-ISCA2-IBA57 complex; [2Fe-2S] cluster binding is absolutely required to promote the complex formation.

Its subcellular location is the mitochondrion. In terms of biological role, involved in the maturation of mitochondrial 4Fe-4S proteins functioning late in the iron-sulfur cluster assembly pathway. May be involved in the binding of an intermediate of Fe/S cluster assembly. This chain is Iron-sulfur cluster assembly 2 homolog, mitochondrial (ISCA2), found in Homo sapiens (Human).